Here is a 479-residue protein sequence, read N- to C-terminus: Ribosomal RNA small subunit methyltransferase F (479 aa).

Residues 125 to 131, E149, D176, and D194 each bind S-adenosyl-L-methionine; that span reads AAAPGSK. C247 functions as the Nucleophile in the catalytic mechanism.

It belongs to the class I-like SAM-binding methyltransferase superfamily. RsmB/NOP family.

The protein localises to the cytoplasm. It catalyses the reaction cytidine(1407) in 16S rRNA + S-adenosyl-L-methionine = 5-methylcytidine(1407) in 16S rRNA + S-adenosyl-L-homocysteine + H(+). Specifically methylates the cytosine at position 1407 (m5C1407) of 16S rRNA. This Salmonella paratyphi B (strain ATCC BAA-1250 / SPB7) protein is Ribosomal RNA small subunit methyltransferase F.